We begin with the raw amino-acid sequence, 1938 residues long: Autophagy-related protein 2 homolog A (1938 aa).

A Chorein N-terminal domain is found at 14–111; that stretch reads ERVCRYLLHH…QLTLQPRRGP (98 aa). Phosphoserine occurs at positions 765, 878, 892, 894, 1266, 1301, and 1309. Residues 1242–1272 are disordered; sequence DLHPPPRPPSPTEIAGQKLSESPASLPSCPP. A disordered region spans residues 1315–1359; sequence LFPGERSGAPPPSPPVGGPAGSLGSCSEEKEDEREEEGDGDTLDS. Acidic residues predominate over residues 1343–1359; that stretch reads EKEDEREEEGDGDTLDS. The tract at residues 1358 to 1404 is WIPI-interacting; sequence DSDEFCILDAPGLGIPPRDGEPVVTQLHPGPIVVRDGYFSRPIGSTD. Residue serine 1402 is modified to Phosphoserine. 2 disordered regions span residues 1438 to 1476 and 1614 to 1657; these read PHPG…GSGR and GETS…PSPP. Low complexity predominate over residues 1446-1464; the sequence is TGLSGPRSSPSRCSGPNRP.

The protein belongs to the ATG2 family. Interacts with ATG9A (via C-terminus). Interacts (via WIPI-interacting region) with WDR45B/WIPI3. Interacts (via WIPI-interacting region) with WDR45/WIPI4. Interacts with TMEM41B. Interacts with VMP1.

It is found in the preautophagosomal structure membrane. It localises to the lipid droplet. Its subcellular location is the endoplasmic reticulum membrane. The catalysed reaction is a 1,2-diacyl-sn-glycero-3-phospho-L-serine(in) = a 1,2-diacyl-sn-glycero-3-phospho-L-serine(out). It carries out the reaction a 1,2-diacyl-sn-glycero-3-phosphoethanolamine(in) = a 1,2-diacyl-sn-glycero-3-phosphoethanolamine(out). In terms of biological role, lipid transfer protein involved in autophagosome assembly. Tethers the edge of the isolation membrane (IM) to the endoplasmic reticulum (ER) and mediates direct lipid transfer from ER to IM for IM expansion. Binds to the ER exit site (ERES), which is the membrane source for autophagosome formation, and extracts phospholipids from the membrane source and transfers them to ATG9 (ATG9A or ATG9B) to the IM for membrane expansion. Lipid transfer activity is enhanced by WIPI1 and WDR45/WIPI4, which promote ATG2A-association with phosphatidylinositol 3-monophosphate (PI3P)-containing membranes. Also regulates lipid droplets morphology and distribution within the cell. The chain is Autophagy-related protein 2 homolog A from Homo sapiens (Human).